Here is a 612-residue protein sequence, read N- to C-terminus: Protein cereblon (612 aa).

Over residues 1 to 11 (MDDEETAEIED) the composition is skewed to acidic residues. Disordered regions lie at residues 1–30 (MDDEETAEIEDVNVLVPATGGEGPVDGASA), 58–133 (MELI…NPHP), and 181–211 (QERRRSRTSEEGEASSEPPHTPPPPRSPYDV). A compositionally biased stretch (low complexity) spans 69 to 81 (AADAPDAAASTGS). The segment covering 181 to 190 (QERRRSRTSE) has biased composition (basic and acidic residues). Residues 250 to 478 (HMLIFLHQHI…IIGSTLKDES (229 aa)) form the Lon N-terminal domain. The CULT domain maps to 477–586 (ESVFYCRYCN…LAGSSVRIGK (110 aa)). Residues Cys-482, Cys-485, Cys-551, and Cys-554 each contribute to the Zn(2+) site.

This sequence belongs to the CRBN family. As to quaternary structure, likely a component of a DCX (DDB1-CUL4-X-box) protein ligase complex. May interact with pic/DDB1. In terms of processing, ubiquitinated.

Its subcellular location is the nucleus. It functions in the pathway protein modification; protein ubiquitination. Its function is as follows. Substrate recognition component of a DCX (DDB1-CUL4-X-box) E3 protein ligase complex that mediates the ubiquitination and subsequent proteasomal degradation of target proteins. Has an essential role in mediating growth by negatively regulating insulin signaling. It also has a role in maintaining presynaptic function in the neuromuscular junction synapses of third-instar larvae. The protein is Protein cereblon of Drosophila willistoni (Fruit fly).